A 255-amino-acid chain; its full sequence is 4-diphosphocytidyl-2-C-methyl-D-erythritol kinase (255 aa).

The active site involves K6. ATP is bound at residue 95–105 (PVCAGLGGGSS). The active site involves D137.

It belongs to the GHMP kinase family. IspE subfamily.

It catalyses the reaction 4-CDP-2-C-methyl-D-erythritol + ATP = 4-CDP-2-C-methyl-D-erythritol 2-phosphate + ADP + H(+). It participates in isoprenoid biosynthesis; isopentenyl diphosphate biosynthesis via DXP pathway; isopentenyl diphosphate from 1-deoxy-D-xylulose 5-phosphate: step 3/6. Functionally, catalyzes the phosphorylation of the position 2 hydroxy group of 4-diphosphocytidyl-2C-methyl-D-erythritol. The chain is 4-diphosphocytidyl-2-C-methyl-D-erythritol kinase from Campylobacter jejuni subsp. jejuni serotype O:6 (strain 81116 / NCTC 11828).